Reading from the N-terminus, the 328-residue chain is Beta-ketoacyl-[acyl-carrier-protein] synthase III (328 aa).

Residues Cys122 and His255 contribute to the active site. The segment at 256–260 (QANVR) is ACP-binding. Asn285 is an active-site residue.

Belongs to the thiolase-like superfamily. FabH family. Homodimer.

The protein resides in the cytoplasm. It catalyses the reaction malonyl-[ACP] + acetyl-CoA + H(+) = 3-oxobutanoyl-[ACP] + CO2 + CoA. Its pathway is lipid metabolism; fatty acid biosynthesis. Its function is as follows. Catalyzes the condensation reaction of fatty acid synthesis by the addition to an acyl acceptor of two carbons from malonyl-ACP. Catalyzes the first condensation reaction which initiates fatty acid synthesis and may therefore play a role in governing the total rate of fatty acid production. Possesses both acetoacetyl-ACP synthase and acetyl transacylase activities. Its substrate specificity determines the biosynthesis of branched-chain and/or straight-chain of fatty acids. The sequence is that of Beta-ketoacyl-[acyl-carrier-protein] synthase III from Bordetella petrii (strain ATCC BAA-461 / DSM 12804 / CCUG 43448).